The chain runs to 379 residues: MSLSRHALQDAAQRFGTPLYLYDAEELDAALWRVQRAFGDARIFYAMKANPNLNLLRRYAAAGVGFECVSLGELLRAEAAGAGGERMILNGPAKSDAEYAAAARLGATIVVDREEEVVLLPPGSRVLVRVNPAMTVSTHEHLATGTARSKFGLTPEQVPGTLAELRDAGHEVLGLHMHIGSAIEQAEDFTAAFARVTELRAHIGGLSVLNVGGGWSLNADLEGIAYEAHEAARVFGAELWVEPGRYLVASAGWLLTRVVGTKRTGRNFCLVDAGMTEFLRPMLYGASHPLYPMWDALATEVWDVAGPACESGDLIARGVPLPTPQRGHLLLIGEAGAYGASMSSTYLSRPRPAEVLWTGHDWQLLRRRETPQDIWAAEV.

Lys48 carries the N6-(pyridoxal phosphate)lysine modification. Pyridoxal 5'-phosphate contacts are provided by residues Gly214 and Glu242–Arg245. 3 residues coordinate substrate: Arg245, Arg280, and Tyr284. Cys309 serves as the catalytic Proton donor. Residues Glu310 and Tyr338 each coordinate substrate. Position 338 (Tyr338) interacts with pyridoxal 5'-phosphate.

This sequence belongs to the Orn/Lys/Arg decarboxylase class-II family. LysA subfamily. As to quaternary structure, homodimer. Pyridoxal 5'-phosphate serves as cofactor.

It catalyses the reaction meso-2,6-diaminopimelate + H(+) = L-lysine + CO2. It functions in the pathway amino-acid biosynthesis; L-lysine biosynthesis via DAP pathway; L-lysine from DL-2,6-diaminopimelate: step 1/1. Functionally, specifically catalyzes the decarboxylation of meso-diaminopimelate (meso-DAP) to L-lysine. The sequence is that of Diaminopimelate decarboxylase from Deinococcus radiodurans (strain ATCC 13939 / DSM 20539 / JCM 16871 / CCUG 27074 / LMG 4051 / NBRC 15346 / NCIMB 9279 / VKM B-1422 / R1).